A 382-amino-acid chain; its full sequence is Alkanesulfonate monooxygenase (382 aa).

The protein belongs to the SsuD family. In terms of assembly, homotetramer.

The enzyme catalyses an alkanesulfonate + FMNH2 + O2 = an aldehyde + FMN + sulfite + H2O + 2 H(+). In terms of biological role, catalyzes the desulfonation of aliphatic sulfonates. The sequence is that of Alkanesulfonate monooxygenase from Yersinia pestis bv. Antiqua (strain Antiqua).